The following is a 200-amino-acid chain: Glycerol-3-phosphate acyltransferase (200 aa).

5 helical membrane passes run 8-28, 57-77, 88-108, 114-134, and 159-179; these read ALAL…GMVL, LAAA…VLAA, IAGL…FAGG, FLGI…LAWL, and FLLG…LIFW.

It belongs to the PlsY family. In terms of assembly, probably interacts with PlsX.

The protein localises to the cell inner membrane. The catalysed reaction is an acyl phosphate + sn-glycerol 3-phosphate = a 1-acyl-sn-glycero-3-phosphate + phosphate. Its pathway is lipid metabolism; phospholipid metabolism. Catalyzes the transfer of an acyl group from acyl-phosphate (acyl-PO(4)) to glycerol-3-phosphate (G3P) to form lysophosphatidic acid (LPA). This enzyme utilizes acyl-phosphate as fatty acyl donor, but not acyl-CoA or acyl-ACP. The protein is Glycerol-3-phosphate acyltransferase of Roseobacter denitrificans (strain ATCC 33942 / OCh 114) (Erythrobacter sp. (strain OCh 114)).